The chain runs to 194 residues: Ion-translocating oxidoreductase complex subunit A (194 aa).

The next 6 membrane-spanning stretches (helical) occupy residues 4–24 (LVLI…QFLG), 39–59 (IGLS…SYLV), 71–91 (FLRT…TEMV), 102–122 (VLGI…VALL), 131–151 (FITA…VLVL), and 172–192 (AIGM…AGLI).

The protein belongs to the NqrDE/RnfAE family. In terms of assembly, the complex is composed of six subunits: RnfA, RnfB, RnfC, RnfD, RnfE and RnfG.

It localises to the cell inner membrane. Part of a membrane-bound complex that couples electron transfer with translocation of ions across the membrane. The sequence is that of Ion-translocating oxidoreductase complex subunit A from Ectopseudomonas mendocina (strain ymp) (Pseudomonas mendocina).